The primary structure comprises 145 residues: D-aminoacyl-tRNA deacylase (145 aa).

A Gly-cisPro motif, important for rejection of L-amino acids motif is present at residues glycine 137–proline 138.

The protein belongs to the DTD family. In terms of assembly, homodimer.

Its subcellular location is the cytoplasm. It catalyses the reaction glycyl-tRNA(Ala) + H2O = tRNA(Ala) + glycine + H(+). The catalysed reaction is a D-aminoacyl-tRNA + H2O = a tRNA + a D-alpha-amino acid + H(+). Functionally, an aminoacyl-tRNA editing enzyme that deacylates mischarged D-aminoacyl-tRNAs. Also deacylates mischarged glycyl-tRNA(Ala), protecting cells against glycine mischarging by AlaRS. Acts via tRNA-based rather than protein-based catalysis; rejects L-amino acids rather than detecting D-amino acids in the active site. By recycling D-aminoacyl-tRNA to D-amino acids and free tRNA molecules, this enzyme counteracts the toxicity associated with the formation of D-aminoacyl-tRNA entities in vivo and helps enforce protein L-homochirality. This chain is D-aminoacyl-tRNA deacylase, found in Ruegeria pomeroyi (strain ATCC 700808 / DSM 15171 / DSS-3) (Silicibacter pomeroyi).